We begin with the raw amino-acid sequence, 533 residues long: Na(+)/H(+) antiporter NhaB (533 aa).

10 consecutive transmembrane segments (helical) span residues Phe28 to Leu50, Pro67 to Leu87, Val96 to Phe116, Val131 to Ile165, Val254 to Gly274, Leu316 to Ile336, Leu364 to Ile384, Leu396 to Gly416, Ala454 to Ile474, and Met481 to Gln501.

It belongs to the NhaB Na(+)/H(+) (TC 2.A.34) antiporter family.

Its subcellular location is the cell inner membrane. It carries out the reaction 2 Na(+)(in) + 3 H(+)(out) = 2 Na(+)(out) + 3 H(+)(in). Na(+)/H(+) antiporter that extrudes sodium in exchange for external protons. This chain is Na(+)/H(+) antiporter NhaB, found in Shewanella baltica (strain OS195).